Here is a 502-residue protein sequence, read N- to C-terminus: Maturase K (502 aa).

It belongs to the intron maturase 2 family. MatK subfamily.

The protein resides in the plastid. It localises to the chloroplast. Usually encoded in the trnK tRNA gene intron. Probably assists in splicing its own and other chloroplast group II introns. The sequence is that of Maturase K from Brassica oleracea (Wild cabbage).